Reading from the N-terminus, the 362-residue chain is Phospho-N-acetylmuramoyl-pentapeptide-transferase (362 aa).

A run of 10 helical transmembrane segments spans residues 28–48 (IISF…VITW), 72–92 (TPTM…MVCA), 94–114 (LSNI…ILGL), 131–151 (VLHK…IIFM), 169–189 (FMPQ…VGTS), 200–220 (GLAI…AWIS), 236–256 (FSGE…GFLW), 264–284 (IFMG…IAVL), 290–310 (LLLI…LQVI), and 339–359 (IIVR…ITLK).

This sequence belongs to the glycosyltransferase 4 family. MraY subfamily. The cofactor is Mg(2+).

The protein localises to the cell inner membrane. The catalysed reaction is UDP-N-acetyl-alpha-D-muramoyl-L-alanyl-gamma-D-glutamyl-meso-2,6-diaminopimeloyl-D-alanyl-D-alanine + di-trans,octa-cis-undecaprenyl phosphate = di-trans,octa-cis-undecaprenyl diphospho-N-acetyl-alpha-D-muramoyl-L-alanyl-D-glutamyl-meso-2,6-diaminopimeloyl-D-alanyl-D-alanine + UMP. It participates in cell wall biogenesis; peptidoglycan biosynthesis. Its function is as follows. Catalyzes the initial step of the lipid cycle reactions in the biosynthesis of the cell wall peptidoglycan: transfers peptidoglycan precursor phospho-MurNAc-pentapeptide from UDP-MurNAc-pentapeptide onto the lipid carrier undecaprenyl phosphate, yielding undecaprenyl-pyrophosphoryl-MurNAc-pentapeptide, known as lipid I. This chain is Phospho-N-acetylmuramoyl-pentapeptide-transferase, found in Blochmanniella pennsylvanica (strain BPEN).